A 350-amino-acid polypeptide reads, in one-letter code: LIM domain-containing protein unc-95 (350 aa).

The segment covering 1–37 (MTISPQPSHQQFESYQWTTESRSSQQRHGTGTPSQDG) has biased composition (polar residues). The segment at 1–65 (MTISPQPSHQ…ESRNSNKDKV (65 aa)) is disordered. Residues 45 to 65 (PVERHVARWRSESRNSNKDKV) are compositionally biased toward basic and acidic residues. Residues 83 to 110 (LTALKNDVEQTTEIIRRKQEQMRMERRQ) are a coiled coil. Disordered regions lie at residues 177 to 198 (RRGQ…EIEY), 206 to 225 (PEEQ…METD), and 235 to 262 (MSEE…SGSP). The region spanning 268–334 (AVCAYCSEEI…HDCFYKLYNG (67 aa)) is the LIM zinc-binding domain.

Post-translationally, ubiquitinated. Ubiquitination by rnf-5 leads to dissociation from muscle dense bodies during molting and is required for ecdysis. In terms of tissue distribution, expressed in the body wall muscles, vulval muscles and the anal muscles. Expressed in the muscle arms of the head muscle cells that form neuromuscular junctions and in the anal depressor muscle.

The protein resides in the cytoplasm. Its subcellular location is the nucleus. The protein localises to the cell membrane. It localises to the myofibril. It is found in the sarcomere. The protein resides in the m line. Its subcellular location is the cell junction. The protein localises to the focal adhesion. Required for the assembly and integrity of muscle dense bodies, which establish the adhesion sites of the muscle cells to the extracellular matrix. Decreased localization of unc-95 to dense bodies and their subsequent dissociation plays an important role in ecdysis during molting. Involved in the organization of the muscle sarcomeric structure and thereby required for locomotion. This Caenorhabditis elegans protein is LIM domain-containing protein unc-95.